The following is an 87-amino-acid chain: MRTLTLLTTLLLLALHTQAESPQGSTKEAPDEEQDISVFFGGDKGTALQDAAVKAGVTCSCRTSSCRFGERLSGACRLNGRIYRLCC.

The first 19 residues, 1–19, serve as a signal peptide directing secretion; that stretch reads MRTLTLLTTLLLLALHTQA. Positions 20 to 58 are excised as a propeptide; it reads ESPQGSTKEAPDEEQDISVFFGGDKGTALQDAAVKAGVT. 3 disulfides stabilise this stretch: Cys59-Cys87, Cys61-Cys76, and Cys66-Cys86.

The protein belongs to the alpha-defensin family. Highest expression in bone marrow and to a much lesser extent in small intestine.

Its subcellular location is the secreted. In terms of biological role, active in vitro against S.aureus, fungi, Gram-positive and Gram-negative bacteria and to a lesser extent against an enveloped virus. This Rattus norvegicus (Rat) protein is Neutrophil antibiotic peptide NP-3A.